The primary structure comprises 81 residues: Cytochrome b559 subunit alpha (81 aa).

Heme contacts are provided by R18 and H23. A helical transmembrane segment spans residues 19-40 (YWVIHSITIPMLFIAGWLFVST).

The protein belongs to the PsbE/PsbF family. In terms of assembly, heterodimer of an alpha subunit and a beta subunit. PSII is composed of 1 copy each of membrane proteins PsbA, PsbB, PsbC, PsbD, PsbE, PsbF, PsbH, PsbI, PsbJ, PsbK, PsbL, PsbM, PsbT, PsbX, PsbY, PsbZ, Psb30/Ycf12, peripheral proteins PsbO, CyanoQ (PsbQ), PsbU, PsbV and a large number of cofactors. It forms dimeric complexes. It depends on heme b as a cofactor.

The protein resides in the cellular thylakoid membrane. This b-type cytochrome is tightly associated with the reaction center of photosystem II (PSII). PSII is a light-driven water:plastoquinone oxidoreductase that uses light energy to abstract electrons from H(2)O, generating O(2) and a proton gradient subsequently used for ATP formation. It consists of a core antenna complex that captures photons, and an electron transfer chain that converts photonic excitation into a charge separation. The polypeptide is Cytochrome b559 subunit alpha (Synechocystis sp. (strain ATCC 27184 / PCC 6803 / Kazusa)).